Here is a 334-residue protein sequence, read N- to C-terminus: ADP-L-glycero-D-manno-heptose-6-epimerase (334 aa).

NADP(+) is bound by residues Phe-11–Ile-12, Asp-32–Asn-33, Lys-39, Lys-54, Gln-77–Ser-81, and Asn-94. The Proton acceptor role is filled by Tyr-141. Lys-145 provides a ligand contact to NADP(+). Asn-171 is a binding site for substrate. NADP(+) contacts are provided by Val-172 and Lys-180. Catalysis depends on Lys-180, which acts as the Proton acceptor. Substrate-binding positions include Arg-182, His-189, Phe-203–Asn-206, Arg-216, and Tyr-295.

This sequence belongs to the NAD(P)-dependent epimerase/dehydratase family. HldD subfamily. In terms of assembly, homopentamer. The cofactor is NADP(+).

The enzyme catalyses ADP-D-glycero-beta-D-manno-heptose = ADP-L-glycero-beta-D-manno-heptose. It participates in nucleotide-sugar biosynthesis; ADP-L-glycero-beta-D-manno-heptose biosynthesis; ADP-L-glycero-beta-D-manno-heptose from D-glycero-beta-D-manno-heptose 7-phosphate: step 4/4. It functions in the pathway bacterial outer membrane biogenesis; LOS core biosynthesis. Functionally, catalyzes the interconversion between ADP-D-glycero-beta-D-manno-heptose and ADP-L-glycero-beta-D-manno-heptose via an epimerization at carbon 6 of the heptose. This chain is ADP-L-glycero-D-manno-heptose-6-epimerase, found in Neisseria meningitidis serogroup B (strain ATCC BAA-335 / MC58).